The primary structure comprises 103 residues: Large ribosomal subunit protein bL21 (103 aa).

Belongs to the bacterial ribosomal protein bL21 family. As to quaternary structure, part of the 50S ribosomal subunit. Contacts protein L20.

Its function is as follows. This protein binds to 23S rRNA in the presence of protein L20. The polypeptide is Large ribosomal subunit protein bL21 (Mycobacterium tuberculosis (strain ATCC 25618 / H37Rv)).